Consider the following 318-residue polypeptide: Ribose-phosphate pyrophosphokinase 3 (318 aa).

An ATP-binding site is contributed by 96-101 (RQDKKD). D128, H130, D139, and D143 together coordinate Mg(2+). H130 is an ATP binding site. The interval 212–227 (NDRVAILVDDMADTCV) is binding of phosphoribosylpyrophosphate.

It belongs to the ribose-phosphate pyrophosphokinase family. Homodimer. The active form is probably a hexamer composed of 3 homodimers. The cofactor is Mg(2+). In terms of tissue distribution, testis.

The enzyme catalyses D-ribose 5-phosphate + ATP = 5-phospho-alpha-D-ribose 1-diphosphate + AMP + H(+). It participates in metabolic intermediate biosynthesis; 5-phospho-alpha-D-ribose 1-diphosphate biosynthesis; 5-phospho-alpha-D-ribose 1-diphosphate from D-ribose 5-phosphate (route I): step 1/1. Activated by magnesium and inorganic phosphate. Its function is as follows. Catalyzes the synthesis of phosphoribosylpyrophosphate (PRPP) that is essential for nucleotide synthesis. The chain is Ribose-phosphate pyrophosphokinase 3 (PRPS1L1) from Homo sapiens (Human).